Here is a 205-residue protein sequence, read N- to C-terminus: uncharacterized protein (205 aa).

Helical transmembrane passes span 12 to 32 (WQIYVGLLLGLIIGLLVGVGF) and 49 to 69 (WISSLSTLIIMCFTAVGVMSW).

It is found in the host membrane. This is an uncharacterized protein from Haemophilus influenzae (Bacteriophage HP1).